We begin with the raw amino-acid sequence, 236 residues long: Small ribosomal subunit protein uS2c (236 aa).

The protein belongs to the universal ribosomal protein uS2 family.

It is found in the plastid. It localises to the chloroplast. This chain is Small ribosomal subunit protein uS2c (rps2), found in Populus alba (White poplar).